Consider the following 150-residue polypeptide: Viral late gene transcription factor 2 (150 aa).

The protein belongs to the orthopoxvirus VLTF-2/OPG126 family. As to quaternary structure, interacts with the late transcription elongation factor VLTF-4/OPG110. Interacts with the late transcription factors VLTF-1/OPG093.

Its function is as follows. Acts with RNA polymerase to initiate transcription from late gene promoters. This is Viral late gene transcription factor 2 (OPG126) from Monkeypox virus.